The primary structure comprises 900 residues: Nonribosomal peptide synthetase AMT10 (900 aa).

Residues 284–686 are adenylation; it reads KQAQQNPAAM…ARRNGYIKLR (403 aa). The region spanning 824-900 is the Carrier domain; sequence ELQSDMERYL…QMARNCSLLD (77 aa). Position 861 is an O-(pantetheine 4'-phosphoryl)serine (serine 861).

It belongs to the NRP synthetase family.

It participates in mycotoxin biosynthesis. Functionally, nonribosomal peptide synthetase; part of the gene clusters that mediate the biosynthesis of AM-toxins, host-selective toxins (HSTs) causing Alternaria blotch on apple, a worldwide distributed disease. AM-toxins are cyclic depsipeptides containing the 3 residues 2-hydroxy-isovaleric acid (2-HIV), dehydroalanine, L-alanine which are common for all 3 AM-toxins I to III. The fourth precursor is L-alpha-amino-methoxyphenyl-valeric acid (L-Amv) for AM-toxin I, L-alpha-amino-phenyl-valeric acid (L-Apv) for AM-toxin II, and L-alpha-amino-hydroxyphenyl-valeric acid (L-Ahv) for AM-toxin III. AM-toxins have two target sites for affecting susceptible apple cells; they cause invagination of the plasma membrane and electrolyte loss and chloroplast disorganization. The non-ribosomal peptide synthetase AMT1 contains 4 catalytic modules and is responsible for activation of each residue in AM-toxin. The aldo-keto reductase AMT2 catalyzes the conversion of 2-keto-isovaleric acid (2-KIV) to 2-hydroxy-isovaleric acid (2-HIV), one of the precursor residues incorporated by AMT1 during AM-toxin biosynthesis, by reduction of its ketone to an alcohol. The cytochrome P450 monooxygenase AMT3 and the thioesterase AMT4 are also important for AM-toxin production, but their exact function within the AM-toxin biosynthesis are not known yet. Up to 21 proteins (including AMT1 to AMT4) are predicted to be involved in AM-toxin biosynthesis since their expression ishighly up-regulated in AM-toxin-producing cultures. The chain is Nonribosomal peptide synthetase AMT10 from Alternaria alternata (Alternaria rot fungus).